The chain runs to 1023 residues: GATOR2 complex protein WDR24 (1023 aa).

WD repeat units follow at residues 16–54, 64–108, 114–154, 159–199, 203–243, 245–287, and 291–329; these read NLGSPLSAISSSPDSTKLIVAGRDIVKIVSVQNNEFKVT, SLNY…SKSV, DHSR…NASK, PKSE…IAVE, SHQG…SLNN, STIS…IPLF, and DHRDVPTGLIWKSPSSLISCSKDSHLLLNEFQDSYKPYQ. The span at 563–578 shows a compositional bias: low complexity; the sequence is SKNIIDNSNDSNQEIN. 2 disordered regions span residues 563 to 621 and 661 to 824; these read SKNI…EPPS and QKST…SIEN. The segment covering 584 to 593 has biased composition (acidic residues); it reads KEDEEEDDDN. Residues 661 to 681 are compositionally biased toward polar residues; the sequence is QKSTDNISDNNSNVHVNIKRQ. A compositionally biased stretch (low complexity) spans 682-695; that stretch reads NQPTNNNNNNSNID. Over residues 696 to 742 the composition is skewed to basic and acidic residues; it reads NLEKKSNKSKSTKENKESSLTDQNKQKRNDNKEKIDNNEIDNDNKDN. Positions 743–759 are enriched in acidic residues; it reads NDDDDNDVDNIGEDNDE. Residues 760-812 show a composition bias toward low complexity; sequence INNNNDNNNNNNNNNNNNNNNNNNNNNNNNNNNNNNNNKNNNNDNNNNNNINN. The C4-type zinc-finger motif lies at 947-969; it reads ACSSCGKSIPQNSIICEKCNKAS. Zn(2+) is bound by residues Cys-948, Cys-951, Cys-962, Cys-965, Cys-972, Cys-975, Cys-986, Cys-989, His-991, His-994, His-997, Cys-1010, Cys-1014, His-1016, and Cys-1018. The RING-type; atypical zinc finger occupies 970–1021; the sequence is SKCSICRLPVKGMWVWCQGCGHGGHLEHMKSWFIDKNQKSCPTGCTHICTPF.

This sequence belongs to the WD repeat WDR24 family. In terms of assembly, probably part of the GATOR complex.

The protein localises to the lysosome membrane. It carries out the reaction S-ubiquitinyl-[E2 ubiquitin-conjugating enzyme]-L-cysteine + [acceptor protein]-L-lysine = [E2 ubiquitin-conjugating enzyme]-L-cysteine + N(6)-ubiquitinyl-[acceptor protein]-L-lysine.. It participates in protein modification; protein ubiquitination. As a component of the GATOR complex may function in the amino acid-sensing branch of the TORC1 signaling pathway. This chain is GATOR2 complex protein WDR24, found in Dictyostelium discoideum (Social amoeba).